We begin with the raw amino-acid sequence, 318 residues long: MRRANRDYGKYLRGSEEMGSCPGVPHEGPLHPAPSAPAPAPPPAASRFMFLALLGLGLGQVVCSIALFLYFRAQMDPNRISEDSTRCFYRILRLRENTGLQDSTLESEDTEALPDSCRRMKQAFQGAVQRELQHIVGPQRFSGVPAMMEGSWLDVARRGKPEAQPFAHLTINAADIPSGSHKVSLSSWYHDRGWAKISNMTLSNGKLRVNQDGFYYLYANICFRHHETSGSVPADYLQLMVYVVKTSIKIPSSHNLMKGGSTKNWSGNSEFHFYSINVGGFFKLRAGEEISVQVSNPSLLDPDQDATYFGAFKVQDID.

Topologically, residues 1-47 (MRRANRDYGKYLRGSEEMGSCPGVPHEGPLHPAPSAPAPAPPPAASR) are cytoplasmic. The segment at 13–41 (RGSEEMGSCPGVPHEGPLHPAPSAPAPAP) is disordered. Pro residues predominate over residues 31–41 (HPAPSAPAPAP). Residues 48 to 68 (FMFLALLGLGLGQVVCSIALF) form a helical; Signal-anchor for type II membrane protein membrane-spanning segment. The Extracellular segment spans residues 69–318 (LYFRAQMDPN…FGAFKVQDID (250 aa)). Positions 165 to 314 (PFAHLTINAA…DATYFGAFKV (150 aa)) constitute a THD domain. N-linked (GlcNAc...) asparagine glycans are attached at residues N199 and N264.

It belongs to the tumor necrosis factor family. Homotrimer. Interacts with TNFRSF11A and TNFRSF11B. Interacts with FBN1 (via N-terminal domain) in a Ca(+2)-dependent manner. Interacts with TNFAIP6 (via both Link and CUB domains). Post-translationally, the soluble form derives from the membrane form by proteolytic processing. As to expression, highly expressed in thymus and bone tissues.

Its subcellular location is the cell membrane. It localises to the secreted. Its function is as follows. Cytokine that binds to TNFRSF11B/OPG and to TNFRSF11A/RANK. Osteoclast differentiation and activation factor. Augments the ability of dendritic cells to stimulate naive T-cell proliferation. May be an important regulator of interactions between T-cells and dendritic cells and may play a role in the regulation of the T-cell-dependent immune response. May also play an important role in enhanced bone-resorption in humoral hypercalcemia of malignancy. Induces osteoclastogenesis by activating multiple signaling pathways in osteoclast precursor cells, chief among which is induction of long lasting oscillations in the intracellular concentration of Ca (2+) resulting in the activation of NFATC1, which translocates to the nucleus and induces osteoclast-specific gene transcription to allow differentiation of osteoclasts. During osteoclast differentiation, in a TMEM64 and ATP2A2-dependent manner induces activation of CREB1 and mitochondrial ROS generation necessary for proper osteoclast generation. In Rattus norvegicus (Rat), this protein is Tumor necrosis factor ligand superfamily member 11 (Tnfsf11).